The sequence spans 358 residues: DNA polymerase IV (358 aa).

The UmuC domain maps to 4-185 (IIHIDMDCYF…LSLRKIPGVG (182 aa)). Mg(2+) contacts are provided by aspartate 8 and aspartate 103. The active site involves glutamate 104.

Belongs to the DNA polymerase type-Y family. In terms of assembly, monomer. Mg(2+) is required as a cofactor.

The protein localises to the cytoplasm. It catalyses the reaction DNA(n) + a 2'-deoxyribonucleoside 5'-triphosphate = DNA(n+1) + diphosphate. Poorly processive, error-prone DNA polymerase involved in untargeted mutagenesis. Copies undamaged DNA at stalled replication forks, which arise in vivo from mismatched or misaligned primer ends. These misaligned primers can be extended by PolIV. Exhibits no 3'-5' exonuclease (proofreading) activity. May be involved in translesional synthesis, in conjunction with the beta clamp from PolIII. The polypeptide is DNA polymerase IV (Shewanella baltica (strain OS155 / ATCC BAA-1091)).